A 124-amino-acid polypeptide reads, in one-letter code: MPTIQQLVRSERRKINKKTKSPALKSCPQRRGVCTRVYTTTPKKPNSALRKVARVRLTSGFEVTAYIPGVGHNIQEHSVVLIRGGRIKDLPGVRYHVVRGTLDAAGVKDRRKSRSKYGTKKPKS.

Disordered regions lie at residues 1-28 and 104-124; these read MPTI…KSCP and AAGV…KPKS. 2 stretches are compositionally biased toward basic residues: residues 11 to 20 and 109 to 124; these read ERRKINKKTK and DRRK…KPKS.

This sequence belongs to the universal ribosomal protein uS12 family. As to quaternary structure, part of the 30S ribosomal subunit.

It localises to the plastid. The protein resides in the chloroplast. Its function is as follows. With S4 and S5 plays an important role in translational accuracy. Located at the interface of the 30S and 50S subunits. This chain is Small ribosomal subunit protein uS12c (rps12), found in Porphyra purpurea (Red seaweed).